A 708-amino-acid chain; its full sequence is Metal-pseudopaline receptor CntO (708 aa).

The N-terminal stretch at Met-1 to Trp-21 is a signal peptide. The 107-residue stretch at Arg-63–Lys-169 folds into the TBDR plug domain. Residues Glu-174–Tyr-708 enclose the TBDR beta-barrel domain.

It belongs to the TonB-dependent receptor family.

The protein localises to the cell outer membrane. Its function is as follows. Transports the metallophore pseudopaline, which is involved in the acquisition of nickel and zinc, and thus enables bacterial growth inside the host, where metal access is limited. Is probably involved in the import of pseudopaline-metal complexes. The sequence is that of Metal-pseudopaline receptor CntO from Pseudomonas aeruginosa (strain ATCC 15692 / DSM 22644 / CIP 104116 / JCM 14847 / LMG 12228 / 1C / PRS 101 / PAO1).